Reading from the N-terminus, the 72-residue chain is Cold shock-like protein CspD (72 aa).

A CSD domain is found at glycine 4 to isoleucine 64.

It localises to the cytoplasm. The chain is Cold shock-like protein CspD (cspD) from Haemophilus influenzae (strain ATCC 51907 / DSM 11121 / KW20 / Rd).